Reading from the N-terminus, the 428-residue chain is Protein ECERIFERUM 26 (428 aa).

Residues 1–36 (MGRSQEQGQGQGPVHSIRLSTVGATRPTETGTTHEP) form a disordered region. Positions 21–36 (TVGATRPTETGTTHEP) are enriched in low complexity.

The protein belongs to the plant acyltransferase family. In terms of tissue distribution, highly expressed in leaves.

Its subcellular location is the cytoplasm. The protein localises to the cytosol. Involved in biosynthesis of the epicuticular wax. Plays a role in very-long-chain fatty acid (VLCFA) biosynthesis and is required for C30 fatty acid elongation in leaf. Despite its classification as a BAHD acyltransferase based on sequence homology, CER26 does not seem to share the catalytic mechanism of the members of the BAHD family. The chain is Protein ECERIFERUM 26 (CER26) from Arabidopsis thaliana (Mouse-ear cress).